The following is a 322-amino-acid chain: Putative HTH-type transcriptional regulatory protein rrnAC2519 (322 aa).

In terms of domain architecture, HTH cro/C1-type spans 132–189 (LADVREDRDWSLGRLAKELGVSRRTVSKYEDGMDASVEVAAELEDLFDAPLTSPVSVL). The H-T-H motif DNA-binding region spans 143–162 (LGRLAKELGVSRRTVSKYED).

This Haloarcula marismortui (strain ATCC 43049 / DSM 3752 / JCM 8966 / VKM B-1809) (Halobacterium marismortui) protein is Putative HTH-type transcriptional regulatory protein rrnAC2519.